The chain runs to 253 residues: uncharacterized protein (253 aa).

It belongs to the NAD(P)-dependent epimerase/dehydratase family.

This is an uncharacterized protein from Bacillus subtilis (strain 168).